We begin with the raw amino-acid sequence, 160 residues long: Cytochrome b6-f complex subunit 4 (160 aa).

3 consecutive transmembrane segments (helical) span residues 36-56 (LLYI…GLAV), 95-115 (LLGI…PFIE), and 131-151 (AVFL…TLPI).

Belongs to the cytochrome b family. PetD subfamily. In terms of assembly, the 4 large subunits of the cytochrome b6-f complex are cytochrome b6, subunit IV (17 kDa polypeptide, PetD), cytochrome f and the Rieske protein, while the 4 small subunits are PetG, PetL, PetM and PetN. The complex functions as a dimer.

It localises to the cellular thylakoid membrane. In terms of biological role, component of the cytochrome b6-f complex, which mediates electron transfer between photosystem II (PSII) and photosystem I (PSI), cyclic electron flow around PSI, and state transitions. This chain is Cytochrome b6-f complex subunit 4, found in Trichodesmium erythraeum (strain IMS101).